Here is a 601-residue protein sequence, read N- to C-terminus: DnaJ-like protein MG200 (601 aa).

Residues 5–77 (KRDYYEVLGI…DKYGFDGVDG (73 aa)) enclose the J domain. Disordered regions lie at residues 143-163 (VQQN…VPGE) and 205-272 (VDSE…EPIP). Over residues 151-160 (KDPDELRSKV) the composition is skewed to basic and acidic residues. The segment covering 263–272 (EPTPIPEPIP) has biased composition (pro residues).

The polypeptide is DnaJ-like protein MG200 (Mycoplasma genitalium (strain ATCC 33530 / DSM 19775 / NCTC 10195 / G37) (Mycoplasmoides genitalium)).